The primary structure comprises 178 residues: uncharacterized protein (178 aa).

The first 19 residues, 1-19 (MINRKILLTSLLLIFTVLS), serve as a signal peptide directing secretion. Active-site residues include Arg52, Glu60, and Arg94.

Belongs to the thermonuclease family.

This is an uncharacterized protein from Haemophilus influenzae (strain ATCC 51907 / DSM 11121 / KW20 / Rd).